Consider the following 78-residue polypeptide: MNIQITFTDSVRQGTSAKGNPYTFQEGFLHLEDKPFPLQCQFFVESVIPAGSYQVPYRINVNNGRPELAFDFKAMKRA.

It belongs to the inovirus G5P protein family. Homodimer.

Its function is as follows. Binds to DNA in a highly cooperative manner without pronounced sequence specificity. During synthesis of the single-stranded (progeny) viral DNA, prevents the conversion into the double-stranded replicative form. G5P is displaced by the capsid protein G8P during phage assembly on the inner bacterial membrane. The sequence is that of DNA-Binding protein G5P (V) from Pseudomonas aeruginosa (Bacteriophage Pf3).